A 436-amino-acid chain; its full sequence is Adenine nucleotide transporter BT1, chloroplastic/amyloplastic/mitochondrial (436 aa).

Residues 83-135 (ASLAPPFPGSRPPGRRGRGSEEEEAEGRRHEEAAAAGRSEPEEGQGQDRQPAP) form a disordered region. Solcar repeat units lie at residues 132–216 (QPAP…AKKF), 227–311 (IPIP…LKRL), and 324–412 (VGPV…CKKI). Transmembrane regions (helical) follow at residues 137 to 158 (RLVS…LETI), 193 to 213 (AVNV…YDTA), 229 to 247 (IPTP…TLCT), 290 to 310 (SLIG…TLKR), 327 to 347 (VATL…TFPL), and 384 to 405 (LYRG…AFMC). Over residues 417–428 (EDEEEEDEAGGG) the composition is skewed to acidic residues. The disordered stretch occupies residues 417-436 (EDEEEEDEAGGGEDDKKKVE).

Belongs to the mitochondrial carrier (TC 2.A.29) family. In terms of tissue distribution, highly expressed in silks and endosperm of developing kernels. Expressed at intermediate levels in tassels and lower levels in stems and leaves.

The protein resides in the plastid. The protein localises to the chloroplast inner membrane. It localises to the amyloplast inner membrane. It is found in the mitochondrion inner membrane. Its activity is regulated as follows. Inhibited by mersalyl. In terms of biological role, probable adenylate translocator that mediates transport of ADP-glucose into endosperm storage plastids during starch synthesis. Transports cytosolic ADP-glucose to amyloplast stroma by counter-exchange with ADP. This is Adenine nucleotide transporter BT1, chloroplastic/amyloplastic/mitochondrial (BT1) from Zea mays (Maize).